A 609-amino-acid chain; its full sequence is UvrABC system protein C (609 aa).

Residues 16-94 (SSPGVYRMYD…IKQYMPRYNV (79 aa)) form the GIY-YIG domain. Residues 203–238 (LQVMTELVSKMEASALALEYEQAASYRDQIAALRRV) form the UVR domain.

It belongs to the UvrC family. As to quaternary structure, interacts with UvrB in an incision complex.

It localises to the cytoplasm. Its function is as follows. The UvrABC repair system catalyzes the recognition and processing of DNA lesions. UvrC both incises the 5' and 3' sides of the lesion. The N-terminal half is responsible for the 3' incision and the C-terminal half is responsible for the 5' incision. In Shewanella sediminis (strain HAW-EB3), this protein is UvrABC system protein C.